The primary structure comprises 99 residues: YcgL domain-containing protein HD_1373 (99 aa).

In terms of domain architecture, YcgL spans 8–92 (NFCAIYKSMS…PAENLLKQFL (85 aa)).

The sequence is that of YcgL domain-containing protein HD_1373 from Haemophilus ducreyi (strain 35000HP / ATCC 700724).